The following is a 380-amino-acid chain: Cytochrome b (380 aa).

Transmembrane regions (helical) follow at residues Phe34–Met54, Trp78–Ile99, Trp114–Leu134, and Phe179–Thr199. His84 and His98 together coordinate heme b. Heme b contacts are provided by His183 and His197. An a ubiquinone-binding site is contributed by His202. 4 helical membrane passes run Ile227–Ser247, Leu289–His309, Leu321–Ser341, and Phe348–Pro368.

This sequence belongs to the cytochrome b family. The cytochrome bc1 complex contains 11 subunits: 3 respiratory subunits (MT-CYB, CYC1 and UQCRFS1), 2 core proteins (UQCRC1 and UQCRC2) and 6 low-molecular weight proteins (UQCRH/QCR6, UQCRB/QCR7, UQCRQ/QCR8, UQCR10/QCR9, UQCR11/QCR10 and a cleavage product of UQCRFS1). This cytochrome bc1 complex then forms a dimer. The cofactor is heme b.

The protein resides in the mitochondrion inner membrane. Its function is as follows. Component of the ubiquinol-cytochrome c reductase complex (complex III or cytochrome b-c1 complex) that is part of the mitochondrial respiratory chain. The b-c1 complex mediates electron transfer from ubiquinol to cytochrome c. Contributes to the generation of a proton gradient across the mitochondrial membrane that is then used for ATP synthesis. This is Cytochrome b (MT-CYB) from Alectoris chukar (Chukar partridge).